The sequence spans 469 residues: UDP-N-acetylmuramate--L-alanine ligase (469 aa).

Gly118–Thr124 contacts ATP.

It belongs to the MurCDEF family.

It localises to the cytoplasm. The catalysed reaction is UDP-N-acetyl-alpha-D-muramate + L-alanine + ATP = UDP-N-acetyl-alpha-D-muramoyl-L-alanine + ADP + phosphate + H(+). It functions in the pathway cell wall biogenesis; peptidoglycan biosynthesis. Its function is as follows. Cell wall formation. The chain is UDP-N-acetylmuramate--L-alanine ligase from Ruegeria sp. (strain TM1040) (Silicibacter sp.).